Here is a 146-residue protein sequence, read N- to C-terminus: Anti-sigma F factor (146 aa).

Belongs to the anti-sigma-factor family.

The enzyme catalyses L-seryl-[protein] + ATP = O-phospho-L-seryl-[protein] + ADP + H(+). It catalyses the reaction L-threonyl-[protein] + ATP = O-phospho-L-threonyl-[protein] + ADP + H(+). Binds to sigma F and blocks its ability to form an RNA polymerase holoenzyme (E-sigma F). Phosphorylates SpoIIAA on a serine residue. This phosphorylation may enable SpoIIAA to act as an anti-anti-sigma factor that counteracts SpoIIAB and thus releases sigma F from inhibition. The sequence is that of Anti-sigma F factor from Bacillus cereus (strain ATCC 14579 / DSM 31 / CCUG 7414 / JCM 2152 / NBRC 15305 / NCIMB 9373 / NCTC 2599 / NRRL B-3711).